Reading from the N-terminus, the 249-residue chain is DNA polymerase sliding clamp 1 (249 aa).

It belongs to the PCNA family. In terms of assembly, homotrimer. The subunits circularize to form a toroid; DNA passes through its center. Replication factor C (RFC) is required to load the toroid on the DNA. Interacts with TIP.

Its activity is regulated as follows. Inhibited by interaction with the PCNA inhibitor TIP. Sliding clamp subunit that acts as a moving platform for DNA processing. Responsible for tethering the catalytic subunit of DNA polymerase and other proteins to DNA during high-speed replication. The chain is DNA polymerase sliding clamp 1 from Thermococcus kodakarensis (strain ATCC BAA-918 / JCM 12380 / KOD1) (Pyrococcus kodakaraensis (strain KOD1)).